The following is a 125-amino-acid chain: Small ribosomal subunit protein uS13 (125 aa).

Residues 95–125 (GLPVNGQRTRTNARTRKGVKKTVANKKKATK) are disordered. Over residues 105–125 (TNARTRKGVKKTVANKKKATK) the composition is skewed to basic residues.

Belongs to the universal ribosomal protein uS13 family. As to quaternary structure, part of the 30S ribosomal subunit. Forms a loose heterodimer with protein S19. Forms two bridges to the 50S subunit in the 70S ribosome.

Its function is as follows. Located at the top of the head of the 30S subunit, it contacts several helices of the 16S rRNA. In the 70S ribosome it contacts the 23S rRNA (bridge B1a) and protein L5 of the 50S subunit (bridge B1b), connecting the 2 subunits; these bridges are implicated in subunit movement. Contacts the tRNAs in the A and P-sites. The sequence is that of Small ribosomal subunit protein uS13 from Leptospira biflexa serovar Patoc (strain Patoc 1 / Ames).